Consider the following 181-residue polypeptide: Protein Syd (181 aa).

Belongs to the Syd family.

It is found in the cell inner membrane. Its function is as follows. Interacts with the SecY protein in vivo. May bind preferentially to an uncomplexed state of SecY, thus functioning either as a chelating agent for excess SecY in the cell or as a regulatory factor that negatively controls the translocase function. The protein is Protein Syd of Alteromonas mediterranea (strain DSM 17117 / CIP 110805 / LMG 28347 / Deep ecotype).